Consider the following 92-residue polypeptide: Bombyxin A-3 (92 aa).

The N-terminal stretch at 1–19 (MKILLAIALMLSTVMWVST) is a signal peptide. Residue Gln20 is modified to Pyrrolidone carboxylic acid. 3 disulfides stabilise this stretch: Cys29/Cys79, Cys41/Cys92, and Cys78/Cys83. Residues 50–70 (SDAQYVSYGSAWLMPYSEGRG) constitute a propeptide, c peptide like.

It belongs to the insulin family. In terms of assembly, heterodimer of a B chain and an A chain linked by two disulfide bonds.

The protein localises to the secreted. Functionally, brain peptide responsible for activation of prothoracic glands to produce ecdysone in insects. This chain is Bombyxin A-3 (BBXA3), found in Bombyx mori (Silk moth).